We begin with the raw amino-acid sequence, 172 residues long: Endoribonuclease YbeY (172 aa).

Positions 1–21 (MTLHVGAEPAPREDDTEDALR) are disordered. Positions 10-21 (APREDDTEDALR) are enriched in basic and acidic residues. 3 residues coordinate Zn(2+): histidine 134, histidine 138, and histidine 144.

Belongs to the endoribonuclease YbeY family. The cofactor is Zn(2+).

It localises to the cytoplasm. In terms of biological role, single strand-specific metallo-endoribonuclease involved in late-stage 70S ribosome quality control and in maturation of the 3' terminus of the 16S rRNA. This Burkholderia lata (strain ATCC 17760 / DSM 23089 / LMG 22485 / NCIMB 9086 / R18194 / 383) protein is Endoribonuclease YbeY.